Reading from the N-terminus, the 165-residue chain is Nucleotide-binding protein P9215_05621 (165 aa).

It belongs to the YajQ family.

Functionally, nucleotide-binding protein. The sequence is that of Nucleotide-binding protein P9215_05621 from Prochlorococcus marinus (strain MIT 9215).